The chain runs to 178 residues: Ribosome maturation factor RimP (178 aa).

This sequence belongs to the RimP family.

Its subcellular location is the cytoplasm. Its function is as follows. Required for maturation of 30S ribosomal subunits. The polypeptide is Ribosome maturation factor RimP (Caulobacter vibrioides (strain ATCC 19089 / CIP 103742 / CB 15) (Caulobacter crescentus)).